The primary structure comprises 330 residues: 2-methyl-6-phytyl-1,4-hydroquinone methyltransferase 1, chloroplastic (330 aa).

Residues 1 to 45 constitute a chloroplast transit peptide; sequence MKEMVSSSTFRAPGGLGFLGPSKIGLIPLRNRSGVRSRVKYIAPK. Topologically, residues 46-295 are chloroplast intermembrane; that stretch reads CAVSSARPAS…DVEKPVNPFT (250 aa). An SAM motif I region spans residues 107–116; the sequence is VVDVGGGTGF. Residues 152-165 form an SAM motif II region; sequence VNIIEGDAEDLPYP. The segment at 193–206 is SAM motif III; it reads RVLKLGGVACLIGP. The helical transmembrane segment at 296–316 threads the bilayer; the sequence is FIFRFVMGTICASYYVLVPIY. The Stromal portion of the chain corresponds to 317–330; sequence MWMKDQIVPKDQPI.

This sequence belongs to the class I-like SAM-binding methyltransferase superfamily. MPBQ/MBSQ MT family.

Its subcellular location is the plastid. It localises to the chloroplast inner membrane. The enzyme catalyses 2-methyl-6-phytyl-1,4-benzene-1,4-diol + S-adenosyl-L-methionine = 2,3-dimethyl-6-phytylbenzene-1,4-diol + S-adenosyl-L-homocysteine + H(+). It carries out the reaction 2-methyl-6-(all-trans-nonaprenyl)benzene-1,4-diol + S-adenosyl-L-methionine = plastoquinol-9 + S-adenosyl-L-homocysteine + H(+). The catalysed reaction is 6-geranylgeranyl-2-methylbenzene-1,4-diol + S-adenosyl-L-methionine = 6-geranylgeranyl-2,3-dimethylbenzene-1,4-diol + S-adenosyl-L-homocysteine + H(+). Its pathway is cofactor biosynthesis; tocopherol biosynthesis. Functionally, involved in a key methylation step in both tocopherols (vitamin E) and plastoquinone synthesis. Catalyzes the conversion of 2-methyl-6-phytyl-1,4-hydroquinone (MPBQ) to 2,3-dimethyl-6-phytyl-1,4-hydroquinone (DMPQ, a substrate for tocopherol cyclase), and 2-methyl-6-solanyl-1,4-benzoquinone (MSBQ) to plastoquinone. This Oryza sativa subsp. japonica (Rice) protein is 2-methyl-6-phytyl-1,4-hydroquinone methyltransferase 1, chloroplastic (ARSM2).